A 92-amino-acid polypeptide reads, in one-letter code: Small ribosomal subunit protein uS19c (92 aa).

It belongs to the universal ribosomal protein uS19 family.

The protein resides in the plastid. It is found in the chloroplast. In terms of biological role, protein S19 forms a complex with S13 that binds strongly to the 16S ribosomal RNA. The protein is Small ribosomal subunit protein uS19c of Platanus occidentalis (Sycamore).